The primary structure comprises 151 residues: Deoxyuridine 5'-triphosphate nucleotidohydrolase (151 aa).

Substrate-binding positions include 70–72 (RSG), asparagine 83, 87–89 (LID), and methionine 97.

This sequence belongs to the dUTPase family. Requires Mg(2+) as cofactor.

The enzyme catalyses dUTP + H2O = dUMP + diphosphate + H(+). It functions in the pathway pyrimidine metabolism; dUMP biosynthesis; dUMP from dCTP (dUTP route): step 2/2. Functionally, this enzyme is involved in nucleotide metabolism: it produces dUMP, the immediate precursor of thymidine nucleotides and it decreases the intracellular concentration of dUTP so that uracil cannot be incorporated into DNA. This is Deoxyuridine 5'-triphosphate nucleotidohydrolase from Ectopseudomonas mendocina (strain ymp) (Pseudomonas mendocina).